The chain runs to 232 residues: Ion-translocating oxidoreductase complex subunit E (232 aa).

The next 6 helical transmembrane spans lie at 18–38, 39–59, 69–89, 93–113, 127–147, and 182–202; these read GLVQ…LTNA, LGLG…VSLV, IPVF…LINA, GLYL…IIIG, AAFD…VLGA, and PFLL…LIAL.

It belongs to the NqrDE/RnfAE family. In terms of assembly, the complex is composed of six subunits: RnfA, RnfB, RnfC, RnfD, RnfE and RnfG.

It localises to the cell inner membrane. Its function is as follows. Part of a membrane-bound complex that couples electron transfer with translocation of ions across the membrane. This Shewanella sp. (strain MR-4) protein is Ion-translocating oxidoreductase complex subunit E.